The primary structure comprises 84 residues: Sulfur carrier protein TusA (84 aa).

The active-site Cysteine persulfide intermediate is Cys-19.

The protein belongs to the sulfur carrier protein TusA family. As to quaternary structure, interacts with IscS.

Its subcellular location is the cytoplasm. It functions in the pathway tRNA modification. Sulfur carrier protein involved in sulfur trafficking in the cell. Part of a sulfur-relay system required for 2-thiolation during synthesis of 2-thiouridine of the modified wobble base 5-methylaminomethyl-2-thiouridine (mnm(5)s(2)U) in tRNA. Interacts with IscS and stimulates its cysteine desulfurase activity. Accepts an activated sulfur from IscS, which is then transferred to TusD, and thus determines the direction of sulfur flow from IscS to 2-thiouridine formation. Also appears to be involved in sulfur transfer for the biosynthesis of molybdopterin. The polypeptide is Sulfur carrier protein TusA (Sodalis glossinidius (strain morsitans)).